The primary structure comprises 473 residues: Probable glycine dehydrogenase (decarboxylating) subunit 2 (473 aa).

The interval 1 to 40 (MEHYEQARYAPAEGETNEPLLSENDQTTVSVDPSLPDDLT) is disordered. Lys-270 is modified (N6-(pyridoxal phosphate)lysine).

It belongs to the GcvP family. C-terminal subunit subfamily. As to quaternary structure, the glycine cleavage system is composed of four proteins: P, T, L and H. In this organism, the P 'protein' is a heterodimer of two subunits. Requires pyridoxal 5'-phosphate as cofactor.

It carries out the reaction N(6)-[(R)-lipoyl]-L-lysyl-[glycine-cleavage complex H protein] + glycine + H(+) = N(6)-[(R)-S(8)-aminomethyldihydrolipoyl]-L-lysyl-[glycine-cleavage complex H protein] + CO2. Its function is as follows. The glycine cleavage system catalyzes the degradation of glycine. The P protein binds the alpha-amino group of glycine through its pyridoxal phosphate cofactor; CO(2) is released and the remaining methylamine moiety is then transferred to the lipoamide cofactor of the H protein. The protein is Probable glycine dehydrogenase (decarboxylating) subunit 2 of Halobacterium salinarum (strain ATCC 700922 / JCM 11081 / NRC-1) (Halobacterium halobium).